The primary structure comprises 75 residues: MSSGGLLLLLGLLTLWAELTPISGQDRPKKPGLCPPRPQKPPCVRECKNDWRCPGEQKCCRYGCIYECRDPIFVK.

An N-terminal signal peptide occupies residues 1–24 (MSSGGLLLLLGLLTLWAELTPISG). The region spanning 27 to 72 (RPKKPGLCPPRPQKPPCVRECKNDWRCPGEQKCCRYGCIYECRDPI) is the WAP domain. 4 disulfide bridges follow: Cys34-Cys60, Cys43-Cys64, Cys47-Cys59, and Cys53-Cys68.

The protein belongs to the venom waprin family. As to expression, expressed by the venom gland.

Its subcellular location is the secreted. Damages membranes of susceptible bacteria. Has no hemolytic activity. Not toxic to mice. Does not inhibit the proteinases elastase and cathepsin G. The protein is Carwaprin-a of Tropidechis carinatus (Australian rough-scaled snake).